An 858-amino-acid chain; its full sequence is Leucine--tRNA ligase (858 aa).

Positions 42 to 52 match the 'HIGH' region motif; that stretch reads PYPSGRLHMGH. A 'KMSKS' region motif is present at residues 618–622; sequence KMSKS. K621 serves as a coordination point for ATP.

The protein belongs to the class-I aminoacyl-tRNA synthetase family.

The protein localises to the cytoplasm. It catalyses the reaction tRNA(Leu) + L-leucine + ATP = L-leucyl-tRNA(Leu) + AMP + diphosphate. This Aliivibrio fischeri (strain MJ11) (Vibrio fischeri) protein is Leucine--tRNA ligase.